The sequence spans 140 residues: Methylglyoxal synthase (140 aa).

The MGS-like domain maps to 1 to 140 (MRSKPRIALI…DQAAADDAAP (140 aa)). Residues His-12, Lys-16, 38–41 (TGTT), and 58–59 (SG) each bind substrate. Asp-64 serves as the catalytic Proton donor/acceptor. A substrate-binding site is contributed by His-91.

Belongs to the methylglyoxal synthase family.

It catalyses the reaction dihydroxyacetone phosphate = methylglyoxal + phosphate. Functionally, catalyzes the formation of methylglyoxal from dihydroxyacetone phosphate. In Cupriavidus metallidurans (strain ATCC 43123 / DSM 2839 / NBRC 102507 / CH34) (Ralstonia metallidurans), this protein is Methylglyoxal synthase.